We begin with the raw amino-acid sequence, 1108 residues long: DNA-directed RNA polymerase subunit beta (1108 aa).

Positions 1081–1108 are disordered; it reads SPRRTPARPTIDYSALDDTDDKEGATTF.

This sequence belongs to the RNA polymerase beta chain family. As to quaternary structure, in cyanobacteria the RNAP catalytic core is composed of 2 alpha, 1 beta, 1 beta', 1 gamma and 1 omega subunit. When a sigma factor is associated with the core the holoenzyme is formed, which can initiate transcription.

The enzyme catalyses RNA(n) + a ribonucleoside 5'-triphosphate = RNA(n+1) + diphosphate. Its function is as follows. DNA-dependent RNA polymerase catalyzes the transcription of DNA into RNA using the four ribonucleoside triphosphates as substrates. The protein is DNA-directed RNA polymerase subunit beta of Thermosynechococcus vestitus (strain NIES-2133 / IAM M-273 / BP-1).